The following is a 642-amino-acid chain: Arginine--tRNA ligase, chloroplastic/mitochondrial (642 aa).

The transit peptide at 1–53 (MFIFPKDENRRETLTTKLRFSADHLTFTTVTEKLRATAWRFAFSSRAKSVVAM) directs the protein to the chloroplast and mitochondrion. Position 54 is an N-acetylalanine (Ala-54). Residues 190–201 (PNIAKEMHVGHL) carry the 'HIGH' region motif.

Belongs to the class-I aminoacyl-tRNA synthetase family.

It is found in the plastid. The protein resides in the chloroplast. The protein localises to the mitochondrion. The catalysed reaction is tRNA(Arg) + L-arginine + ATP = L-arginyl-tRNA(Arg) + AMP + diphosphate. Functionally, forms part of a macromolecular complex that catalyzes the attachment of specific amino acids to cognate tRNAs during protein synthesis. The chain is Arginine--tRNA ligase, chloroplastic/mitochondrial from Arabidopsis thaliana (Mouse-ear cress).